The following is a 291-amino-acid chain: Cytosolic Fe-S cluster assembly factor CFD1 (291 aa).

Residue 24–31 (GKGGVGKS) participates in ATP binding. The [4Fe-4S] cluster site is built by Cys-199 and Cys-202. The segment at 270–291 (ENEEEAKETAEEEKSRAATNGQ) is disordered. Over residues 276-285 (KETAEEEKSR) the composition is skewed to basic and acidic residues.

Belongs to the Mrp/NBP35 ATP-binding proteins family. NUBP2/CFD1 subfamily. Heterotetramer of 2 NBP35 and 2 CFD1 chains. Requires [4Fe-4S] cluster as cofactor.

The protein resides in the cytoplasm. Its function is as follows. Component of the cytosolic iron-sulfur (Fe/S) protein assembly (CIA) machinery. Required for maturation of extramitochondrial Fe-S proteins. The NBP35-CFD1 heterotetramer forms a Fe-S scaffold complex, mediating the de novo assembly of an Fe-S cluster and its transfer to target apoproteins. Required for biogenesis and export of both ribosomal subunits, which may reflect a role in assembly of the Fe/S clusters in RLI1, a protein which performs rRNA processing and ribosome export. The chain is Cytosolic Fe-S cluster assembly factor CFD1 from Yarrowia lipolytica (strain CLIB 122 / E 150) (Yeast).